We begin with the raw amino-acid sequence, 712 residues long: Polyribonucleotide nucleotidyltransferase (712 aa).

Residues D484 and D490 each contribute to the Mg(2+) site. Residues 550 to 609 (PKYKTMDVNPEKIRVLIGPGGKNIKAIIEETGSDVEIQDSGVVNIFAPDTPTLDKTIKLI) form the KH domain. The S1 motif domain maps to 619 to 686 (GEVYDGIVKD…KGGKYSLSRK (68 aa)).

Belongs to the polyribonucleotide nucleotidyltransferase family. Mg(2+) serves as cofactor.

It is found in the cytoplasm. The enzyme catalyses RNA(n+1) + phosphate = RNA(n) + a ribonucleoside 5'-diphosphate. In terms of biological role, involved in mRNA degradation. Catalyzes the phosphorolysis of single-stranded polyribonucleotides processively in the 3'- to 5'-direction. In Brachyspira hyodysenteriae (strain ATCC 49526 / WA1), this protein is Polyribonucleotide nucleotidyltransferase.